A 95-amino-acid polypeptide reads, in one-letter code: uncharacterized protein (95 aa).

This is an uncharacterized protein from Saccharomyces cerevisiae (strain ATCC 204508 / S288c) (Baker's yeast).